Reading from the N-terminus, the 547-residue chain is Putative HMP/thiamine import ATP-binding protein YkoD (547 aa).

ABC transporter domains are found at residues 8–250 (LTVE…KLGI) and 295–523 (LEVS…KAKL). Residues 42–49 (GPSGCGKS) and 327–334 (GPNGTGKS) contribute to the ATP site.

This sequence belongs to the ABC transporter superfamily. As to quaternary structure, the complex is composed of two ATP-binding proteins (YkoD), two transmembrane proteins (YkoC and YkoE) and a solute-binding protein (YkoF).

Its subcellular location is the cell membrane. Its function is as follows. Part of the ABC transporter complex YkoCDEF that could transport hydroxymethylpyrimidine (HMP) and/or thiamine. Could also transport other HMP-containing products. Responsible for energy coupling to the transport system. In Bacillus subtilis (strain 168), this protein is Putative HMP/thiamine import ATP-binding protein YkoD (ykoD).